The following is a 185-amino-acid chain: Threonylcarbamoyl-AMP synthase (185 aa).

The YrdC-like domain maps to glutamate 3 to arginine 185.

The protein belongs to the SUA5 family. TsaC subfamily.

The protein resides in the cytoplasm. The catalysed reaction is L-threonine + hydrogencarbonate + ATP = L-threonylcarbamoyladenylate + diphosphate + H2O. Required for the formation of a threonylcarbamoyl group on adenosine at position 37 (t(6)A37) in tRNAs that read codons beginning with adenine. Catalyzes the conversion of L-threonine, HCO(3)(-)/CO(2) and ATP to give threonylcarbamoyl-AMP (TC-AMP) as the acyladenylate intermediate, with the release of diphosphate. In Shewanella sediminis (strain HAW-EB3), this protein is Threonylcarbamoyl-AMP synthase.